The primary structure comprises 147 residues: MRTFTPKPSDTERTWYVIDATDVVLGRLASQVAKLLRGKHKATFAPHVDTGDFVIVVNADKVALTGNKEQQKLAYRHSGYPGGLKATSYAELLEKRPERAVEKAIRGMVPKNSLGRAQMRKLKVYAGAEHPHGAQKPQTFEITQIAQ.

Belongs to the universal ribosomal protein uL13 family. As to quaternary structure, part of the 50S ribosomal subunit.

Functionally, this protein is one of the early assembly proteins of the 50S ribosomal subunit, although it is not seen to bind rRNA by itself. It is important during the early stages of 50S assembly. The polypeptide is Large ribosomal subunit protein uL13 (Beutenbergia cavernae (strain ATCC BAA-8 / DSM 12333 / CCUG 43141 / JCM 11478 / NBRC 16432 / NCIMB 13614 / HKI 0122)).